The following is a 364-amino-acid chain: Anthranilate phosphoribosyltransferase (364 aa).

5-phospho-alpha-D-ribose 1-diphosphate-binding positions include Gly101, 104–105 (GD), Thr109, 111–114 (NLST), 129–137 (KHGNRAASS), and Gly141. Gly101 contributes to the anthranilate binding site. Ser113 provides a ligand contact to Mg(2+). Residue Asn132 participates in anthranilate binding. Arg187 is a binding site for anthranilate. Positions 245 and 246 each coordinate Mg(2+).

Belongs to the anthranilate phosphoribosyltransferase family. In terms of assembly, homodimer. Requires Mg(2+) as cofactor.

The enzyme catalyses N-(5-phospho-beta-D-ribosyl)anthranilate + diphosphate = 5-phospho-alpha-D-ribose 1-diphosphate + anthranilate. It participates in amino-acid biosynthesis; L-tryptophan biosynthesis; L-tryptophan from chorismate: step 2/5. Its function is as follows. Catalyzes the transfer of the phosphoribosyl group of 5-phosphorylribose-1-pyrophosphate (PRPP) to anthranilate to yield N-(5'-phosphoribosyl)-anthranilate (PRA). This Mycolicibacterium vanbaalenii (strain DSM 7251 / JCM 13017 / BCRC 16820 / KCTC 9966 / NRRL B-24157 / PYR-1) (Mycobacterium vanbaalenii) protein is Anthranilate phosphoribosyltransferase.